Here is a 332-residue protein sequence, read N- to C-terminus: Glycerol-3-phosphate dehydrogenase [NAD(P)+] (332 aa).

The NADPH site is built by W11, R30, and K108. K108, G137, and S139 together coordinate sn-glycerol 3-phosphate. An NADPH-binding site is contributed by A141. Residues K192, D245, S255, R256, and N257 each contribute to the sn-glycerol 3-phosphate site. The active-site Proton acceptor is K192. An NADPH-binding site is contributed by R256. 2 residues coordinate NADPH: V280 and E282.

The protein belongs to the NAD-dependent glycerol-3-phosphate dehydrogenase family.

The protein resides in the cytoplasm. It carries out the reaction sn-glycerol 3-phosphate + NAD(+) = dihydroxyacetone phosphate + NADH + H(+). It catalyses the reaction sn-glycerol 3-phosphate + NADP(+) = dihydroxyacetone phosphate + NADPH + H(+). Its pathway is membrane lipid metabolism; glycerophospholipid metabolism. In terms of biological role, catalyzes the reduction of the glycolytic intermediate dihydroxyacetone phosphate (DHAP) to sn-glycerol 3-phosphate (G3P), the key precursor for phospholipid synthesis. The protein is Glycerol-3-phosphate dehydrogenase [NAD(P)+] of Burkholderia orbicola (strain MC0-3).